The primary structure comprises 154 residues: CASP-like protein 5C2 (154 aa).

Topologically, residues 1-17 (MEHVPGSFGTSASFALR) are cytoplasmic. The helical transmembrane segment at 18 to 38 (FGQTIFSAASLIFMCFDFDFY) threads the bilayer. Residues 39–41 (DFT) are Extracellular-facing. A helical membrane pass occupies residues 42–62 (TFCYLAMVMAIVTPWSILLAL). Residues 63–81 (TDTYSVLVKLLPQELRVLS) are Cytoplasmic-facing. The helical transmembrane segment at 82-102 (IVFAGDFVLSFLSLGGACAVA) threads the bilayer. Residues 103 to 128 (SATELLASADGKICDGSLCIQYQVSA) lie on the Extracellular side of the membrane. Residues 129–149 (ALAFLCWFLLLASALFNFWSL) traverse the membrane as a helical segment. At 150 to 154 (PSLYY) the chain is on the cytoplasmic side.

The protein belongs to the Casparian strip membrane proteins (CASP) family. Homodimer and heterodimers.

It is found in the cell membrane. The protein is CASP-like protein 5C2 of Arabidopsis thaliana (Mouse-ear cress).